An 872-amino-acid chain; its full sequence is MQEQYSPRAVEAAAQQKWQKTAAFKAVEDASRPKYYALSMFPYPSGKLHMGHVRNYTITDVLARFKRLQGFNVLQPMGWDAFGLPAENAAMKNGGAPAAWTYANIEYMKTQLDSLGFALDWERELATCKPDYYRWEQWLFTRLFEKGVIYKKNGVVNWDPVDQTVLANEQVVDGRGWRSGALVEKREIPMYYFRITDYAEQLLADLDKLDGWPEQVKTMQRNWIGKSYGSDVVFPYDEASIGHAGELKVYTTRPDTLMGATYVAVAAEHPLATQAAAGNAALQAFIAECKSGSVAEADVAKMEKKGMDTGLSVIHPLTGERLPVWVANYVLWGYGEGAVMAVPAHDERDFEFANKYQLPIKQVIALASGDGEYDAANWQEWYGAKDDTVKTVNSGKYDGLGYQAAFDAIIGDLQAKSLGQKKTQYRLRDWGISRQRYWGCPIPIIHCPSCGDVPVPEKDLPVTLPENVIPDGAGSPLAKMPEFYETSCPKCGGAAKRETDTMDTFVESSWYYARYASPKCDTAMVDKQAADYWLQVDQYVGGIEHAILHLLYARFFHKLMRDEGLVSSDEPFKSLLTQGMVVCETFYRDLPNGTKDWIAPQDVILERDAKGKIVAAKHRVDGQPVVVGGIEKMSKSKNNGVDPQEFIEKYGADTARLFMMFAAPPEQSLEWSDAGVEGAFRFLKRLWKTAREHVEAGVVAPYASGELNASQKELRFKLHGTIQKVADDYGRRQQFNTAIAAVMELLNAYDKADTSGDIGRAVAQEVLEAATLLLSPIVPHVCDGIWNALKPGTELLAQAWPKVDEAALVKSEIELMVQVCGKLRGSVTVAADAAKDAIEAAALAHENVIKFMEGKPAKKIIVVPGRLVNIVV.

Positions 42–52 match the 'HIGH' region motif; sequence PYPSGKLHMGH. The short motif at 632–636 is the 'KMSKS' region element; it reads KMSKS. Lys635 contributes to the ATP binding site.

It belongs to the class-I aminoacyl-tRNA synthetase family.

The protein resides in the cytoplasm. It carries out the reaction tRNA(Leu) + L-leucine + ATP = L-leucyl-tRNA(Leu) + AMP + diphosphate. The protein is Leucine--tRNA ligase of Chromobacterium violaceum (strain ATCC 12472 / DSM 30191 / JCM 1249 / CCUG 213 / NBRC 12614 / NCIMB 9131 / NCTC 9757 / MK).